The primary structure comprises 433 residues: Glutamate-1-semialdehyde 2,1-aminomutase (433 aa).

The residue at position 270 (Lys270) is an N6-(pyridoxal phosphate)lysine.

It belongs to the class-III pyridoxal-phosphate-dependent aminotransferase family. HemL subfamily. As to quaternary structure, homodimer. Pyridoxal 5'-phosphate is required as a cofactor.

The protein localises to the cytoplasm. The enzyme catalyses (S)-4-amino-5-oxopentanoate = 5-aminolevulinate. Its pathway is porphyrin-containing compound metabolism; protoporphyrin-IX biosynthesis; 5-aminolevulinate from L-glutamyl-tRNA(Glu): step 2/2. The polypeptide is Glutamate-1-semialdehyde 2,1-aminomutase (Symbiobacterium thermophilum (strain DSM 24528 / JCM 14929 / IAM 14863 / T)).